Here is a 264-residue protein sequence, read N- to C-terminus: 3-methyl-2-oxobutanoate hydroxymethyltransferase (264 aa).

Residues Asp45 and Asp84 each coordinate Mg(2+). 3-methyl-2-oxobutanoate-binding positions include 45-46 (DS), Asp84, and Lys112. A Mg(2+)-binding site is contributed by Glu114. Glu181 serves as the catalytic Proton acceptor.

Belongs to the PanB family. As to quaternary structure, homodecamer; pentamer of dimers. Mg(2+) serves as cofactor.

It is found in the cytoplasm. It carries out the reaction 3-methyl-2-oxobutanoate + (6R)-5,10-methylene-5,6,7,8-tetrahydrofolate + H2O = 2-dehydropantoate + (6S)-5,6,7,8-tetrahydrofolate. The protein operates within cofactor biosynthesis; (R)-pantothenate biosynthesis; (R)-pantoate from 3-methyl-2-oxobutanoate: step 1/2. Functionally, catalyzes the reversible reaction in which hydroxymethyl group from 5,10-methylenetetrahydrofolate is transferred onto alpha-ketoisovalerate to form ketopantoate. The polypeptide is 3-methyl-2-oxobutanoate hydroxymethyltransferase (Aliivibrio fischeri (strain MJ11) (Vibrio fischeri)).